The primary structure comprises 345 residues: NADPH dehydrogenase (345 aa).

FMN is bound at residue 23–26 (SPMC). Residue Y28 participates in substrate binding. FMN is bound by residues A60 and Q102. 164–167 (HGAH) contacts substrate. FMN is bound by residues R215 and 307-308 (GR).

The protein belongs to the NADH:flavin oxidoreductase/NADH oxidase family. NamA subfamily. Homotetramer. The cofactor is FMN.

It catalyses the reaction A + NADPH + H(+) = AH2 + NADP(+). Its function is as follows. Catalyzes the reduction of the double bond of an array of alpha,beta-unsaturated aldehydes and ketones. It also reduces the nitro group of nitroester and nitroaromatic compounds. It could have a role in detoxification processes. This is NADPH dehydrogenase from Bacillus cereus (strain Q1).